We begin with the raw amino-acid sequence, 189 residues long: MTIKSDKWIRRMAESHKMIEPFAPDQVRVSEDGRKIVSYGTSSYGYDIRCADEFKIFTNINSTIVDPKNFDEKSFVDFKGDVCIIPPNSFALARTVEYFRIPRSVLTVCLGKSTYARCGIIVNVTPFEPEWEGHVTLEFSNTTPLPAKIYANEGVAQVLFFESDEICETSYADRGGKYQGQHGVTLPRT.

DCTP-binding positions include 112-117 (KSTYAR), 136-138 (TLE), Gln-157, Tyr-171, and Gln-181. The Proton donor/acceptor role is filled by Glu-138.

It belongs to the dCTP deaminase family. As to quaternary structure, homotrimer.

The catalysed reaction is dCTP + H2O + H(+) = dUTP + NH4(+). The protein operates within pyrimidine metabolism; dUMP biosynthesis; dUMP from dCTP (dUTP route): step 1/2. In terms of biological role, catalyzes the deamination of dCTP to dUTP. The chain is dCTP deaminase from Paraburkholderia xenovorans (strain LB400).